A 114-amino-acid polypeptide reads, in one-letter code: UPF0145 protein PYRAB04900 (114 aa).

It belongs to the UPF0145 family.

The sequence is that of UPF0145 protein PYRAB04900 from Pyrococcus abyssi (strain GE5 / Orsay).